Consider the following 610-residue polypeptide: MARMSTNSTTPLSHIRNFSIVAHIDHGKSTLADRLIQTTGGLAEREMSEQVLDNMDIERERGITIKAQTVRLHYQANNGEKYILNLIDTPGHVDFAYEVSRSLSACEGSLLVVDASQGVEAQTLANVYQAIDNNHELVTVLNKIDLPAAEPDRIKEQIEEVIGIDASEAVLISAKTGLGIPDVLEAIVNRLPAPKSPGGDKAPLKALLVDSWYDTYLGVMVLVRIIDGVLTKGQTIRMMGTDAKYQVERVGVLTPKMVNVDSLGPGEIGFITASIKEVADTRVGDTITEDKRPTAQALPGFKPAQPVVFCGLFPVDAADFEDLRAAMGKLRLNDASFSFEMESSAALGFGFRCGFLGLLHLEIIQERLEREFDLDLIATAPSVVYKMFMTDGSERELHNPADMPDVVKISEIHEPWIRATILTPDDYLGGILKLCQDRRGIQIELTYVGTRAMLTYDLPLNEVVFDFYDRLKSISKGYASFDYTLTDHREGNLVKMSILVNGEPVDALSMMVHRTAAEKRGRDMCEKLKELIPKHMFKIPIQAAIGGNVIARETISALRKDVTAKCYGGDATRKRKLLDKQKAGKKRMRQFGKVEIPQEAFIAALKMGDE.

Residues 13 to 195 (SHIRNFSIVA…AIVNRLPAPK (183 aa)) form the tr-type G domain. Residues 25–30 (DHGKST) and 142–145 (NKID) contribute to the GTP site.

The protein belongs to the TRAFAC class translation factor GTPase superfamily. Classic translation factor GTPase family. LepA subfamily.

It localises to the cell inner membrane. It catalyses the reaction GTP + H2O = GDP + phosphate + H(+). In terms of biological role, required for accurate and efficient protein synthesis under certain stress conditions. May act as a fidelity factor of the translation reaction, by catalyzing a one-codon backward translocation of tRNAs on improperly translocated ribosomes. Back-translocation proceeds from a post-translocation (POST) complex to a pre-translocation (PRE) complex, thus giving elongation factor G a second chance to translocate the tRNAs correctly. Binds to ribosomes in a GTP-dependent manner. This is Elongation factor 4 from Rhizobium leguminosarum bv. trifolii (strain WSM2304).